A 517-amino-acid chain; its full sequence is Crotonobetaine/carnitine--CoA ligase (517 aa).

It belongs to the ATP-dependent AMP-binding enzyme family.

The catalysed reaction is 4-(trimethylamino)butanoate + ATP + CoA = 4-(trimethylamino)butanoyl-CoA + AMP + diphosphate. It catalyses the reaction crotonobetaine + ATP + CoA = crotonobetainyl-CoA + AMP + diphosphate. It carries out the reaction (R)-carnitine + ATP + CoA = (R)-carnitinyl-CoA + AMP + diphosphate. It participates in amine and polyamine metabolism; carnitine metabolism. Its function is as follows. Catalyzes the transfer of CoA to carnitine, generating the initial carnitinyl-CoA needed for the CaiB reaction cycle. Also has activity toward crotonobetaine and gamma-butyrobetaine. The sequence is that of Crotonobetaine/carnitine--CoA ligase from Salmonella typhi.